We begin with the raw amino-acid sequence, 231 residues long: Putative S-adenosylmethionine-dependent methyltransferase RcsF (231 aa).

Residues 5-142 form the TsaA-like domain; sequence VSPIGYIRSC…YVPYADAVAD (138 aa). S-adenosyl-L-methionine contacts are provided by residues 22 to 24, 63 to 64, R91, and 122 to 125; these read PRQ, HQ, and LDGT.

Belongs to the tRNA methyltransferase O family.

The sequence is that of Putative S-adenosylmethionine-dependent methyltransferase RcsF (rcsF) from Pseudomonas aeruginosa (strain ATCC 15692 / DSM 22644 / CIP 104116 / JCM 14847 / LMG 12228 / 1C / PRS 101 / PAO1).